The sequence spans 333 residues: Biotin synthase (333 aa).

Residues 47 to 276 form the Radical SAM core domain; that stretch reads ADIQRASLLS…KARVRLSAGR (230 aa). [4Fe-4S] cluster is bound by residues Cys62, Cys66, and Cys69. 4 residues coordinate [2Fe-2S] cluster: Cys107, Cys139, Cys199, and Arg271.

It belongs to the radical SAM superfamily. Biotin synthase family. In terms of assembly, homodimer. [4Fe-4S] cluster serves as cofactor. [2Fe-2S] cluster is required as a cofactor.

The catalysed reaction is (4R,5S)-dethiobiotin + (sulfur carrier)-SH + 2 reduced [2Fe-2S]-[ferredoxin] + 2 S-adenosyl-L-methionine = (sulfur carrier)-H + biotin + 2 5'-deoxyadenosine + 2 L-methionine + 2 oxidized [2Fe-2S]-[ferredoxin]. The protein operates within cofactor biosynthesis; biotin biosynthesis; biotin from 7,8-diaminononanoate: step 2/2. Functionally, catalyzes the conversion of dethiobiotin (DTB) to biotin by the insertion of a sulfur atom into dethiobiotin via a radical-based mechanism. The polypeptide is Biotin synthase (Methylobacterium nodulans (strain LMG 21967 / CNCM I-2342 / ORS 2060)).